Consider the following 196-residue polypeptide: uncharacterized protein (196 aa).

The N-terminal stretch at 1–23 (MSARAPKELRLALPPCLLNRTFA) is a signal peptide. Asparagine 19 and asparagine 26 each carry an N-linked (GlcNAc...) asparagine glycan. Residues 24–60 (SHNASGGSNAGIRSSGAGGGTCITQVGQQLFQSFSST) lie on the Extracellular side of the membrane. The helical transmembrane segment at 61–81 (LVLIVLVTLIFCLIVLSLSTF) threads the bilayer. The Cytoplasmic segment spans residues 82–196 (HIHKRRMKKR…EGLLQTVVLS (115 aa)). Residues 93–184 (MQRAQEEYER…AHAASSCLDT (92 aa)) form a disordered region. Composition is skewed to basic and acidic residues over residues 95-106 (RAQEEYERDHCS) and 124-135 (HGKETRLERQPR). The span at 161–171 (CAPPPPPPVPS) shows a compositional bias: pro residues. Residues 172–181 (PHGAHAASSC) show a composition bias toward low complexity.

The protein resides in the membrane. This is an uncharacterized protein from Rattus norvegicus (Rat).